The following is a 95-amino-acid chain: Large ribosomal subunit protein uL23 (95 aa).

The protein belongs to the universal ribosomal protein uL23 family. Part of the 50S ribosomal subunit. Contacts protein L29, and trigger factor when it is bound to the ribosome.

Its function is as follows. One of the early assembly proteins it binds 23S rRNA. One of the proteins that surrounds the polypeptide exit tunnel on the outside of the ribosome. Forms the main docking site for trigger factor binding to the ribosome. The polypeptide is Large ribosomal subunit protein uL23 (Pelotomaculum thermopropionicum (strain DSM 13744 / JCM 10971 / SI)).